A 1755-amino-acid polypeptide reads, in one-letter code: Transposon Ty1-GR2 Gag-Pol polyprotein (1755 aa).

Residues 1-16 (MESQQLSQHSHISHGS) are compositionally biased toward low complexity. Disordered regions lie at residues 1-93 (MESQ…MMTQ), 126-173 (PQSQ…RPPP), and 352-421 (GSRN…SKST). Composition is skewed to polar residues over residues 48–60 (TKAN…TPAS) and 127–152 (QSQF…GNTF). Low complexity predominate over residues 153–165 (TDSSSADSDMTST). The tract at residues 299–401 (NNGIHINNKV…NSKSKTARAH (103 aa)) is RNA-binding. Residues 402–418 (NVSTSNNSPSTDNDSIS) show a composition bias toward low complexity. Ser-416 bears the Phosphoserine mark. The For protease activity; shared with dimeric partner role is filled by Asp-461. Positions 583-640 (NVHTSESTRKYPYPFIHRMLAHANAQTIRYSLKNNTITYFNESDVDWSSAIDYQCPDC) are integrase-type zinc finger-like. In terms of domain architecture, Integrase catalytic spans 660 to 835 (NSYEPFQYLH…AGLDISTLLP (176 aa)). Positions 671 and 736 each coordinate Mg(2+). Disordered stretches follow at residues 956 to 1087 (SKAV…ETEK), 1092 to 1111 (RSPS…NIVP), and 1130 to 1187 (DLPL…DNET). The span at 960-969 (SPTDSTPPST) shows a compositional bias: low complexity. A compositionally biased stretch (polar residues) spans 1005–1015 (STPQISNIEST). The segment covering 1038–1053 (ESSHASKSKDFRHSDS) has biased composition (basic and acidic residues). Polar residues-rich tracts occupy residues 1054–1082 (YSEN…QISD) and 1101–1111 (PENNSSHNIVP). The Bipartite nuclear localization signal motif lies at 1178-1212 (KKRSLEDNETEIKVSRDTWNTKNMRSLEPPRSKKR). Residues 1338-1476 (NNYYITQLDI…DILGLEIKYQ (139 aa)) enclose the Reverse transcriptase Ty1/copia-type domain. Mg(2+) is bound by residues Asp-1346, Asp-1427, Asp-1428, Asp-1610, Glu-1652, and Asp-1685. In terms of domain architecture, RNase H Ty1/copia-type spans 1610-1752 (DASYGNQPYY…IKTFKLLTNK (143 aa)).

In terms of assembly, the capsid protein forms a homotrimer, from which the VLPs are assembled. The protease is a homodimer, whose active site consists of two apposed aspartic acid residues. In terms of processing, initially, virus-like particles (VLPs) are composed of the structural unprocessed proteins Gag and Gag-Pol, and also contain the host initiator methionine tRNA (tRNA(i)-Met) which serves as a primer for minus-strand DNA synthesis, and a dimer of genomic Ty RNA. Processing of the polyproteins occurs within the particle and proceeds by an ordered pathway, called maturation. First, the protease (PR) is released by autocatalytic cleavage of the Gag-Pol polyprotein yielding capsid protein p45 and a Pol-p154 precursor protein. This cleavage is a prerequisite for subsequent processing of Pol-p154 at the remaining sites to release the mature structural and catalytic proteins. Maturation takes place prior to the RT reaction and is required to produce transposition-competent VLPs.

Its subcellular location is the cytoplasm. The protein resides in the nucleus. It catalyses the reaction DNA(n) + a 2'-deoxyribonucleoside 5'-triphosphate = DNA(n+1) + diphosphate. The enzyme catalyses Endonucleolytic cleavage to 5'-phosphomonoester.. Capsid protein (CA) is the structural component of the virus-like particle (VLP), forming the shell that encapsulates the retrotransposons dimeric RNA genome. The particles are assembled from trimer-clustered units and there are holes in the capsid shells that allow for the diffusion of macromolecules. CA also has nucleocapsid-like chaperone activity, promoting primer tRNA(i)-Met annealing to the multipartite primer-binding site (PBS), dimerization of Ty1 RNA and initiation of reverse transcription. Its function is as follows. The aspartyl protease (PR) mediates the proteolytic cleavages of the Gag and Gag-Pol polyproteins after assembly of the VLP. In terms of biological role, reverse transcriptase/ribonuclease H (RT) is a multifunctional enzyme that catalyzes the conversion of the retro-elements RNA genome into dsDNA within the VLP. The enzyme displays a DNA polymerase activity that can copy either DNA or RNA templates, and a ribonuclease H (RNase H) activity that cleaves the RNA strand of RNA-DNA heteroduplexes during plus-strand synthesis and hydrolyzes RNA primers. The conversion leads to a linear dsDNA copy of the retrotransposon that includes long terminal repeats (LTRs) at both ends. Functionally, integrase (IN) targets the VLP to the nucleus, where a subparticle preintegration complex (PIC) containing at least integrase and the newly synthesized dsDNA copy of the retrotransposon must transit the nuclear membrane. Once in the nucleus, integrase performs the integration of the dsDNA into the host genome. The sequence is that of Transposon Ty1-GR2 Gag-Pol polyprotein (TY1B-GR2) from Saccharomyces cerevisiae (strain ATCC 204508 / S288c) (Baker's yeast).